Reading from the N-terminus, the 285-residue chain is Cell division protein ZipA (285 aa).

Residue Met-1 is a topological domain, periplasmic. Residues 2-22 (EIGLREWLIVIGIVVIGGILF) traverse the membrane as a helical segment. The Cytoplasmic portion of the chain corresponds to 23–285 (DGWRRMRGSK…FERRQLTHKR (263 aa)). Residues 49–88 (AVSENSELLGPSRSVDFPQGAGFEPDEENLPSLSVRGPSR) form a disordered region.

This sequence belongs to the ZipA family. As to quaternary structure, interacts with FtsZ via their C-terminal domains.

It localises to the cell inner membrane. In terms of biological role, essential cell division protein that stabilizes the FtsZ protofilaments by cross-linking them and that serves as a cytoplasmic membrane anchor for the Z ring. Also required for the recruitment to the septal ring of downstream cell division proteins. This is Cell division protein ZipA from Azotobacter vinelandii (strain DJ / ATCC BAA-1303).